A 241-amino-acid polypeptide reads, in one-letter code: Homeobox protein TGIF2LX (241 aa).

Disordered stretches follow at residues 1 to 56 (MEAA…PKGY) and 115 to 213 (RHGN…EYPD). The segment covering 21 to 39 (AKTQSPAQDTSTVSRNSAD) has biased composition (polar residues). A DNA-binding region (homeobox; TALE-type) is located at residues 48 to 111 (EHTKKPKGYL…INARRRILPD (64 aa)).

It belongs to the TALE/TGIF homeobox family.

The protein localises to the nucleus. In terms of biological role, may have a transcription role in testis. The chain is Homeobox protein TGIF2LX (TGIF2LX) from Hylobates lar (Lar gibbon).